The primary structure comprises 597 residues: Formate--tetrahydrofolate ligase (597 aa).

Residue 84 to 91 participates in ATP binding; it reads TPLGEGKS.

This sequence belongs to the formate--tetrahydrofolate ligase family.

The catalysed reaction is (6S)-5,6,7,8-tetrahydrofolate + formate + ATP = (6R)-10-formyltetrahydrofolate + ADP + phosphate. Its pathway is one-carbon metabolism; tetrahydrofolate interconversion. This Dehalococcoides mccartyi (strain CBDB1) protein is Formate--tetrahydrofolate ligase.